A 367-amino-acid polypeptide reads, in one-letter code: 4-hydroxy-3-methylbut-2-en-1-yl diphosphate synthase (flavodoxin) (367 aa).

[4Fe-4S] cluster-binding residues include C270, C273, C305, and E312.

It belongs to the IspG family. It depends on [4Fe-4S] cluster as a cofactor.

The catalysed reaction is (2E)-4-hydroxy-3-methylbut-2-enyl diphosphate + oxidized [flavodoxin] + H2O + 2 H(+) = 2-C-methyl-D-erythritol 2,4-cyclic diphosphate + reduced [flavodoxin]. Its pathway is isoprenoid biosynthesis; isopentenyl diphosphate biosynthesis via DXP pathway; isopentenyl diphosphate from 1-deoxy-D-xylulose 5-phosphate: step 5/6. In terms of biological role, converts 2C-methyl-D-erythritol 2,4-cyclodiphosphate (ME-2,4cPP) into 1-hydroxy-2-methyl-2-(E)-butenyl 4-diphosphate. The polypeptide is 4-hydroxy-3-methylbut-2-en-1-yl diphosphate synthase (flavodoxin) (Buchnera aphidicola subsp. Schizaphis graminum (strain Sg)).